The sequence spans 411 residues: Tyrosine--tRNA ligase (411 aa).

Residue Y34 participates in L-tyrosine binding. Residues 39–48 carry the 'HIGH' region motif; it reads CTATSLHIGS. The L-tyrosine site is built by Y171 and Q175. The 'KMSKS' region signature appears at 231-235; it reads KMGKT. K234 contacts ATP. Positions 345-411 constitute an S4 RNA-binding domain; that stretch reads ISAYELFHEA…GKKRHILVRV (67 aa).

This sequence belongs to the class-I aminoacyl-tRNA synthetase family. TyrS type 1 subfamily. As to quaternary structure, homodimer.

The protein resides in the cytoplasm. The catalysed reaction is tRNA(Tyr) + L-tyrosine + ATP = L-tyrosyl-tRNA(Tyr) + AMP + diphosphate + H(+). In terms of biological role, catalyzes the attachment of tyrosine to tRNA(Tyr) in a two-step reaction: tyrosine is first activated by ATP to form Tyr-AMP and then transferred to the acceptor end of tRNA(Tyr). In Rickettsia massiliae (strain Mtu5), this protein is Tyrosine--tRNA ligase.